The sequence spans 217 residues: 3,4-dihydroxy-2-butanone 4-phosphate synthase (217 aa).

Residues 37-38 (RE), aspartate 42, 150-154 (RRGHT), and glutamate 174 each bind D-ribulose 5-phosphate. Glutamate 38 is a Mg(2+) binding site. Position 153 (histidine 153) interacts with Mg(2+).

The protein belongs to the DHBP synthase family. Homodimer. The cofactor is Mg(2+). Mn(2+) serves as cofactor.

The catalysed reaction is D-ribulose 5-phosphate = (2S)-2-hydroxy-3-oxobutyl phosphate + formate + H(+). Its pathway is cofactor biosynthesis; riboflavin biosynthesis; 2-hydroxy-3-oxobutyl phosphate from D-ribulose 5-phosphate: step 1/1. In terms of biological role, catalyzes the conversion of D-ribulose 5-phosphate to formate and 3,4-dihydroxy-2-butanone 4-phosphate. The chain is 3,4-dihydroxy-2-butanone 4-phosphate synthase from Shewanella loihica (strain ATCC BAA-1088 / PV-4).